The primary structure comprises 667 residues: Cyclin-dependent kinase 17 (667 aa).

Disordered regions lie at residues Met1–Asn70 and Asp85–Met184. Acidic residues-rich tracts occupy residues Glu99–Asp111 and Asp119–Glu144. A compositionally biased stretch (polar residues) spans Thr151–Thr164. In terms of domain architecture, Protein kinase spans Tyr328–Leu609. Residues Leu334–Val342 and Lys357 contribute to the ATP site. Asp449 acts as the Proton acceptor in catalysis. Positions 454 and 467 each coordinate Mg(2+). The disordered stretch occupies residues His642–Thr667. Residues His644 to Thr653 show a composition bias toward basic residues.

This sequence belongs to the protein kinase superfamily. CMGC Ser/Thr protein kinase family. CDC2/CDKX subfamily. In terms of assembly, interacts with cyy-1; the interaction is required to activate pct-1. Mg(2+) serves as cofactor.

The protein resides in the cytoplasm. It is found in the cell projection. The protein localises to the dendrite. It localises to the axon. The catalysed reaction is L-seryl-[protein] + ATP = O-phospho-L-seryl-[protein] + ADP + H(+). The enzyme catalyses L-threonyl-[protein] + ATP = O-phospho-L-threonyl-[protein] + ADP + H(+). Its function is as follows. Serine/threonine-protein kinase, which, in association with cyy-1, regulates the trafficking of synaptic vesicles in the DA9 motor neuron and probably also in the DD motor neurons and in RIA interneurons. In terms of biological role, sufficient for synaptic vesicle trafficking in the DA9 motor neuron. In Caenorhabditis elegans, this protein is Cyclin-dependent kinase 17.